Here is a 506-residue protein sequence, read N- to C-terminus: Maturase K (506 aa).

This sequence belongs to the intron maturase 2 family. MatK subfamily.

Its subcellular location is the plastid. The protein localises to the chloroplast. Functionally, usually encoded in the trnK tRNA gene intron. Probably assists in splicing its own and other chloroplast group II introns. In Arctostaphylos uva-ursi (Bearberry), this protein is Maturase K.